The chain runs to 97 residues: Small cell adhesion glycoprotein (97 aa).

Over 1-36 (MNNLPATPSPEELMTTPVFQAPETLSPQAEEASTAL) the chain is Extracellular. O-linked (GalNAc...) threonine glycosylation occurs at Thr7. Residue Ser9 is glycosylated (O-linked (GalNAc...) serine). 3 O-linked (GalNAc...) threonine glycosylation sites follow: Thr15, Thr16, and Thr24. An O-linked (GalNAc...) serine glycan is attached at Ser26. Residues 37–57 (IAVVITVVFLTLLSVVTLIFF) form a helical; Signal-anchor for type III membrane protein membrane-spanning segment. Topologically, residues 58 to 97 (HLYKNKGSYVTYEPAEGEPSAILQMETDSAKGREKEEYFI) are cytoplasmic.

It belongs to the SMAGP family. Post-translationally, O-glycosylated. The O-glycan is modified with sialic acid residues.

It localises to the cell membrane. Its subcellular location is the cytoplasmic vesicle membrane. Its function is as follows. May play a role in epithelial cell-cell contacts. May play a role in tumor invasiveness and metastasis formation. This Mus musculus (Mouse) protein is Small cell adhesion glycoprotein (Smagp).